The primary structure comprises 359 residues: 4-galactosyl-N-acetylglucosaminide 3-alpha-L-fucosyltransferase 9 (359 aa).

At Met1–Pro11 the chain is on the cytoplasmic side. The chain crosses the membrane as a helical; Signal-anchor for type II membrane protein span at residues Phe12–Pro32. Over Thr33–Asn359 the chain is Lumenal. Asn62 carries an N-linked (GlcNAc...) asparagine glycan. The acceptor-binding stretch occupies residues Glu63 to Tyr168. Gln75 provides a ligand contact to a beta-D-galactosyl-(1-&gt;4)-N-acetyl-beta-D-glucosaminyl derivative. 3 disulfide bridges follow: Cys82–Cys335, Cys91–Cys338, and Cys190–Cys238. The N-linked (GlcNAc...) asparagine glycan is linked to Asn101. Glu137 serves as a coordination point for a beta-D-galactosyl-(1-&gt;4)-N-acetyl-beta-D-glucosaminyl derivative. The active-site Nucleophile is the Glu137. Glu137 lines the GDP-beta-L-fucose pocket. Asn153 carries N-linked (GlcNAc...) asparagine glycosylation. Tyr168, Val192, Ser194, Asn195, Arg202, Val226, Tyr241, Asn246, Tyr252, Glu255, and Lys256 together coordinate GDP-beta-L-fucose. Residues Gly169–Leu326 are donor-binding. The acceptor-binding stretch occupies residues Pro327 to Asn359.

Belongs to the glycosyltransferase 10 family. In terms of assembly, homodimer. N-glycosylated with complex-type N-glycans.

Its subcellular location is the golgi apparatus. The protein resides in the trans-Golgi network membrane. It localises to the golgi apparatus membrane. The catalysed reaction is a beta-D-galactosyl-(1-&gt;4)-N-acetyl-beta-D-glucosaminyl derivative + GDP-beta-L-fucose = a beta-D-galactosyl-(1-&gt;4)-[alpha-L-fucosyl-(1-&gt;3)]-N-acetyl-beta-D-glucosaminyl derivative + GDP + H(+). It carries out the reaction an alpha-Neu5Ac-(2-&gt;3)-beta-D-Gal-(1-&gt;4)-beta-D-GlcNAc-(1-&gt;3)-beta-D-Gal-(1-&gt;4)-beta-D-GlcNAc derivative + GDP-beta-L-fucose = an alpha-Neu5Ac-(2-&gt;3)-beta-D-Gal-(1-&gt;4)-beta-D-GlcNAc-(1-&gt;3)-beta-D-Gal-(1-&gt;4)-[alpha-L-Fuc-(1-&gt;3)]-beta-D-GlcNAc derivative + GDP + H(+). It catalyses the reaction alpha-N-glycoloylneuraminosyl-(2-&gt;3)-beta-D-galactosyl-(1-&gt;4)-N-acetyl-beta-D-glucosaminyl-(1-&gt;3)-beta-D-galactosyl-(1-&gt;4)-N-acetyl-beta-D-glucosaminyl-(1-&gt;3)-beta-D-galactosyl-(1-&gt;4)-beta-D-glucosyl-(1&lt;-&gt;1')-ceramide + GDP-beta-L-fucose = alpha-N-glycoloylneuraminosyl-(2-&gt;3)-beta-D-galactosyl-(1-&gt;4)-N-acetyl-beta-D-glucosaminyl-(1-&gt;3)-beta-D-galactosyl-(1-&gt;4)-[alpha-L-fucosyl-(1-&gt;3)]-N-acetyl-beta-D-glucosaminyl-(1-&gt;3)-beta-D-galactosyl-(1-&gt;4)-beta-D-glucosyl-(1&lt;-&gt;1')-ceramide + GDP + H(+). The enzyme catalyses alpha-D-galactosyl-(1-&gt;3)-beta-D-galactosyl-(1-&gt;4)-N-acetyl-beta-D-glucosaminyl-(1-&gt;3)-beta-D-galactosyl-(1-&gt;4)-beta-D-glucosyl-(1&lt;-&gt;1')-ceramide + GDP-beta-L-fucose = a neolactoside IV(3)-alpha-Gal,III(3)-alpha-Fuc-nLc4Cer + GDP + H(+). The catalysed reaction is a neolactoside nLc4Cer + GDP-beta-L-fucose = a neolactoside III(3)-alpha-Fuc-nLc4Cer + GDP + H(+). It carries out the reaction an N-acetyl-alpha-neuraminyl-(2-&gt;3)-beta-D-galactosyl-(1-&gt;4)-N-acetyl-beta-D-glucosaminyl derivative + GDP-beta-L-fucose = an alpha-Neu5Ac-(2-&gt;3)-beta-D-Gal-(1-&gt;4)-[alpha-L-Fuc-(1-&gt;3)]-beta-D-GlcNAc derivative + GDP + H(+). It catalyses the reaction beta-D-Gal-(1-&gt;4)-beta-D-GlcNAc-(1-&gt;3)-beta-D-Gal-(1-&gt;4)-D-Glc + GDP-beta-L-fucose = beta-D-Gal-(1-&gt;4)-[alpha-L-Fuc-(1-&gt;3)]-beta-D-GlcNAc-(1-&gt;3)-beta-D-Gal-(1-&gt;4)-D-Glc + GDP + H(+). The enzyme catalyses an alpha-L-Fuc-(1-&gt;2)-beta-D-Gal-(1-&gt;4)-beta-D-GlcNAc derivative + GDP-beta-L-fucose = an alpha-L-Fuc-(1-&gt;2)-beta-D-Gal-(1-&gt;4)-[alpha-L-Fuc-(1-&gt;3)]-beta-D-GlcNAc derivative + GDP + H(+). It functions in the pathway protein modification; protein glycosylation. The protein operates within glycolipid biosynthesis. Activated by Mn2+. Catalyzes alpha(1-&gt;3) linkage of fucosyl moiety transferred from GDP-beta-L-fucose to N-acetyl glucosamine (GlcNAc) within type 2 lactosamine (LacNAc, beta-D-Gal-(1-&gt;4)-beta-D-GlcNAc-) glycan attached to glycolipids and N- or O-linked glycoproteins. Fucosylates distal type 2 LacNAc and its fucosylated (H-type 2 LacNAc) and sialylated (sialyl-type 2 LacNAc) derivatives to form Lewis x (Lex) (CD15) and Lewis y (Ley) antigenic epitopes involved in cell adhesion and differentiation. Generates Lex epitopes in the brain, presumably playing a role in the maintenance of neuronal stemness and neurite outgrowth in progenitor neural cells. Fucosylates the internal type 2 LacNAc unit of the polylactosamine chain to form VIM-2 antigen that serves as recognition epitope for SELE. Can also modify milk oligosaccharides in particular type 2 tetrasaccharide LNnT. The protein is 4-galactosyl-N-acetylglucosaminide 3-alpha-L-fucosyltransferase 9 of Bos taurus (Bovine).